The sequence spans 789 residues: Cadherin-6 (789 aa).

A signal peptide spans 1-18; it reads MRTYRYFLLLFWVGQPYP. A propeptide spanning residues 19–53 is cleaved from the precursor; the sequence is TFSNPLSKRTSGFPAKRRALELSANSRNELSRSKR. 5 Cadherin domains span residues 54–159, 160–268, 269–383, 384–486, and 487–608; these read SWMW…EPIF, TKDV…PPRF, PQST…PPVF, SKPA…DNAP, and EFAE…LIHP. At 54–615 the chain is on the extracellular side; sequence SWMWNQFFLL…IHPTGLSTGA (562 aa). The N-linked (GlcNAc...) asparagine glycan is linked to asparagine 255. The segment at 259-288 is disordered; the sequence is TDVNDNPPRFPQSTYQFKTPESSPPGTPIG. The segment covering 269 to 279 has biased composition (polar residues); sequence PQSTYQFKTPE. Asparagine 399, asparagine 437, asparagine 455, and asparagine 536 each carry an N-linked (GlcNAc...) asparagine glycan. The chain crosses the membrane as a helical span at residues 616 to 636; that stretch reads LVAILLCIVILLVTVVLFAAL. Topologically, residues 637–789 are cytoplasmic; it reads RRQRKKEPLI…YGGMDSDKDS (153 aa). Serine 785 and serine 789 each carry phosphoserine.

Highly expressed in kidney and brain.

The protein resides in the cell membrane. Cadherins are calcium-dependent cell adhesion proteins. They preferentially interact with themselves in a homophilic manner in connecting cells; cadherins may thus contribute to the sorting of heterogeneous cell types. This Rattus norvegicus (Rat) protein is Cadherin-6 (Cdh6).